We begin with the raw amino-acid sequence, 693 residues long: Bacterial dynamin-like protein (693 aa).

The Cytoplasmic portion of the chain corresponds to 1-521 (MVNQVATDRF…DNSPGWAKWA (521 aa)). Residues 66-313 (QQGVFRLLVL…QADLDGTGFP (248 aa)) form the Dynamin-type G domain. Residues 76 to 83 (GDMKRGKS) form a G1 motif region. 79–84 (KRGKST) provides a ligand contact to GTP. Residues 102-103 (CT) form a G2 motif region. Positions 180–183 (DSPG) are G3 motif. A GTP-binding site is contributed by 235–241 (FLVNAWD). The interval 238 to 241 (NAWD) is G4 motif. Position 268 (Asn-268) is a region of interest, G5 motif. 292–293 (SI) lines the GTP pocket. The interval 311-571 (GFPKFMDSLN…TAVTGILLGP (261 aa)) is middle domain. A coiled-coil region spans residues 347 to 378 (REAVARRIPLLEQDVNELKKRIDSVEPEFNKL). Residues 522–574 (MGLLSLSKGNLAGFALAGAGFDWKNILLNYFTVIGIGGIITAVTGILLGPIGF) lie within the membrane without spanning it. The tract at residues 572–606 (IGFALLGLGVGFLQADQARRELVKTAKKELVKHLP) is paddle domain. The Cytoplasmic segment spans residues 575-693 (ALLGLGVGFL…AYSNLLAYYS (119 aa)). Positions 607-693 (QVAHEQSQVV…AYSNLLAYYS (87 aa)) are GED. A coiled-coil region spans residues 661–688 (ESEFNRLKNLQEDVIAQLQKIEAAYSNL).

It belongs to the TRAFAC class dynamin-like GTPase superfamily. Dynamin/Fzo/YdjA family. Mitofusin subfamily. In terms of assembly, homodimer. Self-assembles in the presence of GMP-PNP and liposomes, and probably also in the presence of GTP.

The protein localises to the cell inner membrane. It catalyses the reaction GTP + H2O = GDP + phosphate + H(+). Its function is as follows. Dynamin-related GTPase probably involved in membrane remodeling. Lipid and nucleotide-binding are thought to induce a large intramolecular rearrangement, leading to assembly on lipid bilayers and possible membrane curving. In the presence of the non-hydrolyzable GTP analog GMP-PNP self-assembles on a lipid bilayer; this does not stimulate subsequent GTPase activity. Does not bind lipids in the presence of GDP; perhaps GTP hydrolysis disrupts membrane-binding. The chain is Bacterial dynamin-like protein from Nostoc punctiforme (strain ATCC 29133 / PCC 73102).